A 155-amino-acid polypeptide reads, in one-letter code: Putative protein p31 (155 aa).

This Acyrthosiphon pisum secondary endosymbiont phage 1 (Bacteriophage APSE-1) protein is Putative protein p31 (31).